The sequence spans 217 residues: Cytochrome b5 domain-containing protein 1 (217 aa).

One can recognise a Cytochrome b5 heme-binding domain in the interval 6–72; the sequence is PRYFTPREVS…NPKTGDVKTH (67 aa). Heme-binding residues include H41 and H72.

It belongs to the cytochrome b5 family.

It localises to the cytoplasm. The protein resides in the cytoskeleton. Its subcellular location is the cilium axoneme. Its function is as follows. Radial spoke stalk protein that binds heme under oxidizing conditions. Required for the coordinated beating of multiple cilia maybe by functioning in a redox signaling pathway. This chain is Cytochrome b5 domain-containing protein 1 (cyb5d1), found in Xenopus laevis (African clawed frog).